We begin with the raw amino-acid sequence, 326 residues long: Phospho-N-acetylmuramoyl-pentapeptide-transferase (326 aa).

The next 10 membrane-spanning stretches (helical) occupy residues 2–22 (ILAT…FPYF), 51–71 (VPPM…LLWA), 73–93 (LTPE…LGFI), 113–133 (ILIQ…YSAE), 143–163 (GVII…IVGS), 175–195 (GLAA…AYIT), 199–219 (MNIT…LWFN), 225–245 (IFMG…TSVL), 250–270 (MLFA…IIQI), and 305–325 (VIVM…ITFL).

It belongs to the glycosyltransferase 4 family. MraY subfamily. Mg(2+) serves as cofactor.

It is found in the cell membrane. The enzyme catalyses UDP-N-acetyl-alpha-D-muramoyl-L-alanyl-gamma-D-glutamyl-meso-2,6-diaminopimeloyl-D-alanyl-D-alanine + di-trans,octa-cis-undecaprenyl phosphate = di-trans,octa-cis-undecaprenyl diphospho-N-acetyl-alpha-D-muramoyl-L-alanyl-D-glutamyl-meso-2,6-diaminopimeloyl-D-alanyl-D-alanine + UMP. The protein operates within cell wall biogenesis; peptidoglycan biosynthesis. Its function is as follows. Catalyzes the initial step of the lipid cycle reactions in the biosynthesis of the cell wall peptidoglycan: transfers peptidoglycan precursor phospho-MurNAc-pentapeptide from UDP-MurNAc-pentapeptide onto the lipid carrier undecaprenyl phosphate, yielding undecaprenyl-pyrophosphoryl-MurNAc-pentapeptide, known as lipid I. This is Phospho-N-acetylmuramoyl-pentapeptide-transferase from Wolbachia pipientis wMel.